A 296-amino-acid chain; its full sequence is Cytidine deaminase (296 aa).

2 consecutive CMP/dCMP-type deaminase domains span residues 47–167 and 186–296; these read ELNE…FGPS and DSND…VEPE. 88–90 is a binding site for substrate; the sequence is NIE. His-101 contacts Zn(2+). Glu-103 (proton donor) is an active-site residue. 2 residues coordinate Zn(2+): Cys-128 and Cys-131.

The protein belongs to the cytidine and deoxycytidylate deaminase family. In terms of assembly, homodimer. The cofactor is Zn(2+).

It carries out the reaction cytidine + H2O + H(+) = uridine + NH4(+). The catalysed reaction is 2'-deoxycytidine + H2O + H(+) = 2'-deoxyuridine + NH4(+). This enzyme scavenges exogenous and endogenous cytidine and 2'-deoxycytidine for UMP synthesis. The chain is Cytidine deaminase from Shewanella pealeana (strain ATCC 700345 / ANG-SQ1).